The sequence spans 94 residues: uncharacterized protein (94 aa).

2 helical membrane-spanning segments follow: residues 7–24 and 39–61; these read IFFI…SFNV and AVPI…LLFL. The tract at residues 68 to 94 is disordered; it reads TRKQKREDSPTSAPTGGVSSPEHVDVP.

It is found in the cell membrane. This is an uncharacterized protein from Treponema pallidum (strain Nichols).